The following is a 469-amino-acid chain: Threonine synthase (469 aa).

Lys-112 carries the N6-(pyridoxal phosphate)lysine modification.

It belongs to the threonine synthase family. The cofactor is pyridoxal 5'-phosphate.

It catalyses the reaction O-phospho-L-homoserine + H2O = L-threonine + phosphate. Its pathway is amino-acid biosynthesis; L-threonine biosynthesis; L-threonine from L-aspartate: step 5/5. Its function is as follows. Catalyzes the gamma-elimination of phosphate from L-phosphohomoserine and the beta-addition of water to produce L-threonine. The chain is Threonine synthase (thrC) from Pseudomonas aeruginosa (strain ATCC 15692 / DSM 22644 / CIP 104116 / JCM 14847 / LMG 12228 / 1C / PRS 101 / PAO1).